A 148-amino-acid chain; its full sequence is Ubiquitin conjugating enzyme E2 B (148 aa).

In terms of domain architecture, UBC core spans 2 to 148 (AAHKRLQKEI…AKEWTKKYAK (147 aa)). The active-site Glycyl thioester intermediate is Cys-87.

It belongs to the ubiquitin-conjugating enzyme family. Interacts with mkkA (via F-box/WD40 repeat domains).

The catalysed reaction is S-ubiquitinyl-[E1 ubiquitin-activating enzyme]-L-cysteine + [E2 ubiquitin-conjugating enzyme]-L-cysteine = [E1 ubiquitin-activating enzyme]-L-cysteine + S-ubiquitinyl-[E2 ubiquitin-conjugating enzyme]-L-cysteine.. Its pathway is protein modification; protein ubiquitination. In terms of biological role, involved in protein ubiquitination and degradation during development. Mediates protein ubiquitination at the mound and finger stage required for subsequent development and may be an essential component of the developmental transition between the induction of postaggregative gene expression and subsequent cell-type differentiation and morphogenesis. ubcB and ubpB differentially control ubiquitination/deubiquitination and degradation of mkkA protein in a cell-type-specific and temporally regulated manner. In Dictyostelium discoideum (Social amoeba), this protein is Ubiquitin conjugating enzyme E2 B (ubcB).